Reading from the N-terminus, the 244-residue chain is Small ribosomal subunit protein eS6 (244 aa).

The interval 185–244 (RLQRKRHMRAVKRRRYAKQREEEATYAKLLAKRKKEEREAHAKRRSSARESSLRESKSKA) is disordered. The span at 186 to 201 (LQRKRHMRAVKRRRYA) shows a compositional bias: basic residues. A compositionally biased stretch (basic and acidic residues) spans 231–244 (SARESSLRESKSKA).

This sequence belongs to the eukaryotic ribosomal protein eS6 family. Ribosomal protein S6 is the major substrate of protein kinases in eukaryote ribosomes.

In terms of biological role, component of the 40S small ribosomal subunit. Plays an important role in controlling cell growth and proliferation through the selective translation of particular classes of mRNA. In Branchiostoma floridae (Florida lancelet), this protein is Small ribosomal subunit protein eS6 (RPS6).